A 161-amino-acid chain; its full sequence is C-type lectin lectoxin-Lio3 (161 aa).

An N-terminal signal peptide occupies residues 1-23 (MRRFIFMSLGLLVLAFSLSGIGA). 3 disulfide bridges follow: cysteine 27–cysteine 38, cysteine 55–cysteine 154, and cysteine 129–cysteine 146. In terms of domain architecture, C-type lectin spans 34 to 155 (HNISCYKLFT…CGLLHYFICQ (122 aa)). Asparagine 35 carries an N-linked (GlcNAc...) asparagine glycan. The Mannose-binding signature appears at 117–119 (KGE). Ca(2+)-binding residues include glutamate 127, asparagine 142, and aspartate 143.

It belongs to the true venom lectin family. Expressed by the venom gland.

It is found in the secreted. In terms of biological role, mannose-binding lectin which recognizes specific carbohydrate structures and agglutinates a variety of animal cells by binding to cell-surface glycoproteins and glycolipids. May be a calcium-dependent lectin. The polypeptide is C-type lectin lectoxin-Lio3 (Erythrolamprus poecilogyrus (Water snake)).